The primary structure comprises 1080 residues: Carbamoyl phosphate synthase large chain (1080 aa).

A carboxyphosphate synthetic domain region spans residues 1–403 (MPKRTDLKTI…SLQKALRGLE (403 aa)). The ATP site is built by Arg-129, Arg-169, Gly-175, Gly-176, Glu-208, Val-210, Glu-215, Gly-241, Val-242, His-243, Gln-285, and Glu-299. The ATP-grasp 1 domain maps to 133–328 (RVAMGEIGLD…IAKVAAKLAV (196 aa)). Gln-285, Glu-299, and Asn-301 together coordinate Mg(2+). 3 residues coordinate Mn(2+): Gln-285, Glu-299, and Asn-301. Positions 404–554 (TGKIGLDPTG…YSTYEDECEA (151 aa)) are oligomerization domain. A carbamoyl phosphate synthetic domain region spans residues 555-942 (LPSNRDKIMI…AFARAQEAGG (388 aa)). The 198-residue stretch at 679–876 (QQLVDKLGLK…LAKIAARCMA (198 aa)) folds into the ATP-grasp 2 domain. ATP contacts are provided by Arg-715, Arg-754, Leu-756, Glu-761, Gly-787, Val-788, His-789, Ser-790, Gln-830, and Glu-847. Mg(2+) contacts are provided by Gln-830, Glu-847, and Asn-849. 3 residues coordinate Mn(2+): Gln-830, Glu-847, and Asn-849. Residues 943-1080 (IKAPPLGKAF…LQELHKELEA (138 aa)) enclose the MGS-like domain. Residues 943–1080 (IKAPPLGKAF…LQELHKELEA (138 aa)) form an allosteric domain region.

It belongs to the CarB family. In terms of assembly, composed of two chains; the small (or glutamine) chain promotes the hydrolysis of glutamine to ammonia, which is used by the large (or ammonia) chain to synthesize carbamoyl phosphate. Tetramer of heterodimers (alpha,beta)4. Mg(2+) is required as a cofactor. The cofactor is Mn(2+).

The catalysed reaction is hydrogencarbonate + L-glutamine + 2 ATP + H2O = carbamoyl phosphate + L-glutamate + 2 ADP + phosphate + 2 H(+). It carries out the reaction hydrogencarbonate + NH4(+) + 2 ATP = carbamoyl phosphate + 2 ADP + phosphate + 2 H(+). The protein operates within amino-acid biosynthesis; L-arginine biosynthesis; carbamoyl phosphate from bicarbonate: step 1/1. It functions in the pathway pyrimidine metabolism; UMP biosynthesis via de novo pathway; (S)-dihydroorotate from bicarbonate: step 1/3. In terms of biological role, large subunit of the glutamine-dependent carbamoyl phosphate synthetase (CPSase). CPSase catalyzes the formation of carbamoyl phosphate from the ammonia moiety of glutamine, carbonate, and phosphate donated by ATP, constituting the first step of 2 biosynthetic pathways, one leading to arginine and/or urea and the other to pyrimidine nucleotides. The large subunit (synthetase) binds the substrates ammonia (free or transferred from glutamine from the small subunit), hydrogencarbonate and ATP and carries out an ATP-coupled ligase reaction, activating hydrogencarbonate by forming carboxy phosphate which reacts with ammonia to form carbamoyl phosphate. The chain is Carbamoyl phosphate synthase large chain from Xanthomonas campestris pv. campestris (strain ATCC 33913 / DSM 3586 / NCPPB 528 / LMG 568 / P 25).